The sequence spans 165 residues: Crossover junction endodeoxyribonuclease RuvC (165 aa).

Catalysis depends on residues aspartate 7, glutamate 67, and aspartate 140. Mg(2+)-binding residues include aspartate 7, glutamate 67, and aspartate 140.

It belongs to the RuvC family. As to quaternary structure, homodimer which binds Holliday junction (HJ) DNA. The HJ becomes 2-fold symmetrical on binding to RuvC with unstacked arms; it has a different conformation from HJ DNA in complex with RuvA. In the full resolvosome a probable DNA-RuvA(4)-RuvB(12)-RuvC(2) complex forms which resolves the HJ. Requires Mg(2+) as cofactor.

The protein resides in the cytoplasm. The enzyme catalyses Endonucleolytic cleavage at a junction such as a reciprocal single-stranded crossover between two homologous DNA duplexes (Holliday junction).. In terms of biological role, the RuvA-RuvB-RuvC complex processes Holliday junction (HJ) DNA during genetic recombination and DNA repair. Endonuclease that resolves HJ intermediates. Cleaves cruciform DNA by making single-stranded nicks across the HJ at symmetrical positions within the homologous arms, yielding a 5'-phosphate and a 3'-hydroxyl group; requires a central core of homology in the junction. The consensus cleavage sequence is 5'-(A/T)TT(C/G)-3'. Cleavage occurs on the 3'-side of the TT dinucleotide at the point of strand exchange. HJ branch migration catalyzed by RuvA-RuvB allows RuvC to scan DNA until it finds its consensus sequence, where it cleaves and resolves the cruciform DNA. This Dehalococcoides mccartyi (strain ATCC BAA-2266 / KCTC 15142 / 195) (Dehalococcoides ethenogenes (strain 195)) protein is Crossover junction endodeoxyribonuclease RuvC.